The following is a 145-amino-acid chain: Actin-depolymerizing factor 2 (145 aa).

Positions 13–145 constitute an ADF-H domain; the sequence is GMGVAPDIRD…DLEVLRERAH (133 aa).

It belongs to the actin-binding proteins ADF family.

In terms of biological role, actin-depolymerizing protein. Severs actin filaments (F-actin) and binds to actin monomers. The sequence is that of Actin-depolymerizing factor 2 (ADF2) from Oryza sativa subsp. japonica (Rice).